The following is a 721-amino-acid chain: Penicillin-binding protein activator LpoA (721 aa).

A signal peptide spans 1–26 (MVPLTFLRTKASRSLPIMLAALIFAG). The N-palmitoyl cysteine moiety is linked to residue Cys27. Cys27 is lipidated: S-diacylglycerol cysteine. Residues 316 to 330 (TSDLTSAQAPAQGTM) show a composition bias toward polar residues. The segment at 316 to 393 (TSDLTSAQAP…PAAQPQAVAA (78 aa)) is disordered. Residues 331–393 (QNPVTAPTTP…PAAQPQAVAA (63 aa)) show a composition bias toward low complexity.

Belongs to the LpoA family. Interacts with PBP1a.

The protein resides in the cell outer membrane. Functionally, regulator of peptidoglycan synthesis that is essential for the function of penicillin-binding protein 1A (PBP1a). The chain is Penicillin-binding protein activator LpoA from Enterobacter sp. (strain 638).